A 142-amino-acid chain; its full sequence is Large ribosomal subunit protein uL13 (142 aa).

It belongs to the universal ribosomal protein uL13 family. As to quaternary structure, part of the 50S ribosomal subunit.

This protein is one of the early assembly proteins of the 50S ribosomal subunit, although it is not seen to bind rRNA by itself. It is important during the early stages of 50S assembly. This chain is Large ribosomal subunit protein uL13, found in Treponema denticola (strain ATCC 35405 / DSM 14222 / CIP 103919 / JCM 8153 / KCTC 15104).